The following is an 84-amino-acid chain: MKGMILFISCLLLIGIVVECKEGYLMDHEGCKLSCFIRPSGYCGSECKIKKGSSGYCAWPACYCYGLPNWVKVWDRATNKCGKK.

The first 20 residues, 1–20 (MKGMILFISCLLLIGIVVEC), serve as a signal peptide directing secretion. Residues 21–82 (KEGYLMDHEG…VWDRATNKCG (62 aa)) enclose the LCN-type CS-alpha/beta domain. Disulfide bonds link cysteine 31/cysteine 81, cysteine 35/cysteine 57, cysteine 43/cysteine 62, and cysteine 47/cysteine 64. Residue cysteine 81 is modified to Cysteine amide.

Belongs to the long (4 C-C) scorpion toxin superfamily. Sodium channel inhibitor family. Beta subfamily. In terms of tissue distribution, expressed by the venom gland.

Its subcellular location is the secreted. Its function is as follows. Beta toxins bind voltage-independently at site-4 of sodium channels (Nav) and shift the voltage of activation toward more negative potentials thereby affecting sodium channel activation and promoting spontaneous and repetitive firing. Is lethal to mice. In Tityus bahiensis (Brazilian scorpion), this protein is Toxin Tb1.